Reading from the N-terminus, the 233-residue chain is Uracil-DNA glycosylase (233 aa).

The active-site Proton acceptor is the Asp-70.

This sequence belongs to the uracil-DNA glycosylase (UDG) superfamily. UNG family.

It localises to the cytoplasm. It catalyses the reaction Hydrolyzes single-stranded DNA or mismatched double-stranded DNA and polynucleotides, releasing free uracil.. Its function is as follows. Excises uracil residues from the DNA which can arise as a result of misincorporation of dUMP residues by DNA polymerase or due to deamination of cytosine. The chain is Uracil-DNA glycosylase from Helicobacter pylori (strain Shi470).